The primary structure comprises 150 residues: UPF0336 protein SGR_2883 (150 aa).

The 107-residue stretch at 10–116 (RTYPPTPAYE…STIEAVKSLA (107 aa)) folds into the MaoC-like domain.

It belongs to the UPF0336 family.

The sequence is that of UPF0336 protein SGR_2883 from Streptomyces griseus subsp. griseus (strain JCM 4626 / CBS 651.72 / NBRC 13350 / KCC S-0626 / ISP 5235).